We begin with the raw amino-acid sequence, 202 residues long: Dephospho-CoA kinase (202 aa).

The 198-residue stretch at 4-201 folds into the DPCK domain; sequence VVALTGGIAS…QKYLAMSRQN (198 aa). Position 12-17 (12-17) interacts with ATP; that stretch reads ASGKTT.

It belongs to the CoaE family.

The protein localises to the cytoplasm. It carries out the reaction 3'-dephospho-CoA + ATP = ADP + CoA + H(+). Its pathway is cofactor biosynthesis; coenzyme A biosynthesis; CoA from (R)-pantothenate: step 5/5. Functionally, catalyzes the phosphorylation of the 3'-hydroxyl group of dephosphocoenzyme A to form coenzyme A. This Vibrio cholerae serotype O1 (strain ATCC 39315 / El Tor Inaba N16961) protein is Dephospho-CoA kinase.